Reading from the N-terminus, the 2321-residue chain is Major viral transcription factor ICP4 homolog (2321 aa).

Disordered stretches follow at residues Gly-19–Leu-183, Ile-296–Ile-329, Glu-350–Gly-438, Met-954–Ala-1180, Asp-1360–His-1392, Leu-1597–Tyr-1841, and Gln-2277–Asp-2321. Residues Ser-114–Tyr-147 show a composition bias toward low complexity. 2 stretches are compositionally biased toward pro residues: residues Pro-302–Ile-329 and Gln-355–Pro-367. A compositionally biased stretch (low complexity) spans Ala-368–Leu-389. The segment covering Ser-390 to Ser-410 has biased composition (pro residues). Composition is skewed to polar residues over residues Ser-424–Pro-433 and Pro-1002–Arg-1011. Over residues Pro-1031 to Pro-1093 the composition is skewed to low complexity. Positions Gly-1151 to Lys-1161 are enriched in basic residues. Composition is skewed to polar residues over residues Asn-1169–Ala-1180 and Ser-1371–Ala-1389. Low complexity predominate over residues Ser-1630–Lys-1644. Polar residues-rich tracts occupy residues Lys-1720–Ser-1743 and Val-1801–Leu-1816. Low complexity predominate over residues Ser-1817–Ser-1839.

Belongs to the herpesviridae ICP4 family. A long stretch of serine residues may be a major site of phosphorylation.

Its subcellular location is the host nucleus. Functionally, this IE protein is a multifunctional protein capable of migrating to the nucleus, binding to DNA, trans-activating other viral genes, and autoregulating its own synthesis. It is required for the switch from immediate-early to early mode of gene expression. This Gallus gallus (Chicken) protein is Major viral transcription factor ICP4 homolog (MDV084).